A 391-amino-acid polypeptide reads, in one-letter code: Toluene efflux pump periplasmic linker protein TtgG (391 aa).

The N-terminal stretch at 1 to 32 (MRAERWSQTVRQIRSPRALRVIPLTALMLISG) is a signal peptide. Cys33 is lipidated: N-palmitoyl cysteine. A lipid anchor (S-diacylglycerol cysteine) is attached at Cys33. The stretch at 107–136 (RTYEAQLRRAEANRTSAQNLARRYETLLKT) forms a coiled coil.

This sequence belongs to the membrane fusion protein (MFP) (TC 8.A.1) family.

Its subcellular location is the cell inner membrane. In terms of biological role, the periplasmic linker component of an organic solvent efflux pump. Involved in export of a number of organic solvents, including toluene and styrene. This is the most important solvent efflux pump in this strain, although it can export AMP and some antibiotics. The polypeptide is Toluene efflux pump periplasmic linker protein TtgG (ttgG) (Pseudomonas putida (strain DOT-T1E)).